The primary structure comprises 433 residues: Serine hydroxymethyltransferase (433 aa).

(6S)-5,6,7,8-tetrahydrofolate is bound by residues L121 and 125-127 (GHI). K231 is subject to N6-(pyridoxal phosphate)lysine.

Belongs to the SHMT family. Homodimer. Pyridoxal 5'-phosphate is required as a cofactor.

The protein localises to the cytoplasm. Its pathway is amino-acid biosynthesis; glycine biosynthesis; glycine from L-serine: step 1/1. In terms of biological role, catalyzes the reversible interconversion of serine and glycine with a modified folate serving as the one-carbon carrier. Also exhibits a pteridine-independent aldolase activity toward beta-hydroxyamino acids, producing glycine and aldehydes, via a retro-aldol mechanism. The protein is Serine hydroxymethyltransferase of Picrophilus torridus (strain ATCC 700027 / DSM 9790 / JCM 10055 / NBRC 100828 / KAW 2/3).